We begin with the raw amino-acid sequence, 247 residues long: Germin-like protein 9-1 (247 aa).

A signal peptide spans 1–25 (MMMSSRSSVSLGVLLLLAVILSAGA). The region spanning 53–201 (KNLVTGNSGD…SMHTDQATVD (149 aa)) is the Cupin type-1 domain. Mn(2+) contacts are provided by H100, H102, and E107. Residue N126 is glycosylated (N-linked (GlcNAc...) asparagine). H148 serves as a coordination point for Mn(2+). N-linked (GlcNAc...) asparagine glycosylation occurs at N153.

Belongs to the germin family. Oligomer (believed to be a pentamer but probably hexamer).

It is found in the secreted. It localises to the extracellular space. The protein localises to the apoplast. In terms of biological role, may play a role in plant defense. Probably has no oxalate oxidase activity even if the active site is conserved. The protein is Germin-like protein 9-1 of Oryza sativa subsp. japonica (Rice).